A 350-amino-acid chain; its full sequence is Nicotinate-nucleotide--dimethylbenzimidazole phosphoribosyltransferase (350 aa).

Glutamate 317 functions as the Proton acceptor in the catalytic mechanism.

The protein belongs to the CobT family.

The enzyme catalyses 5,6-dimethylbenzimidazole + nicotinate beta-D-ribonucleotide = alpha-ribazole 5'-phosphate + nicotinate + H(+). It functions in the pathway nucleoside biosynthesis; alpha-ribazole biosynthesis; alpha-ribazole from 5,6-dimethylbenzimidazole: step 1/2. Functionally, catalyzes the synthesis of alpha-ribazole-5'-phosphate from nicotinate mononucleotide (NAMN) and 5,6-dimethylbenzimidazole (DMB). This is Nicotinate-nucleotide--dimethylbenzimidazole phosphoribosyltransferase from Shewanella sp. (strain W3-18-1).